We begin with the raw amino-acid sequence, 476 residues long: Aspartyl/glutamyl-tRNA(Asn/Gln) amidotransferase subunit B (476 aa).

The protein belongs to the GatB/GatE family. GatB subfamily. Heterotrimer of A, B and C subunits.

The catalysed reaction is L-glutamyl-tRNA(Gln) + L-glutamine + ATP + H2O = L-glutaminyl-tRNA(Gln) + L-glutamate + ADP + phosphate + H(+). It carries out the reaction L-aspartyl-tRNA(Asn) + L-glutamine + ATP + H2O = L-asparaginyl-tRNA(Asn) + L-glutamate + ADP + phosphate + 2 H(+). Allows the formation of correctly charged Asn-tRNA(Asn) or Gln-tRNA(Gln) through the transamidation of misacylated Asp-tRNA(Asn) or Glu-tRNA(Gln) in organisms which lack either or both of asparaginyl-tRNA or glutaminyl-tRNA synthetases. The reaction takes place in the presence of glutamine and ATP through an activated phospho-Asp-tRNA(Asn) or phospho-Glu-tRNA(Gln). The polypeptide is Aspartyl/glutamyl-tRNA(Asn/Gln) amidotransferase subunit B (Bacillus velezensis (strain DSM 23117 / BGSC 10A6 / LMG 26770 / FZB42) (Bacillus amyloliquefaciens subsp. plantarum)).